Here is a 329-residue protein sequence, read N- to C-terminus: Carrier protein YMC2, mitochondrial (329 aa).

The interval 1-27 (MSEEFPTPQLLDELEDQQKVTTPNEKR) is disordered. The transit peptide at 1–33 (MSEEFPTPQLLDELEDQQKVTTPNEKRELSSNR) directs the protein to the mitochondrion. Solcar repeat units follow at residues 34 to 115 (VLKD…MKRF), 143 to 226 (SQYY…LVAR), and 238 to 325 (PPWK…VMRF). The next 6 membrane-spanning stretches (helical) occupy residues 38–58 (IFAGTIGGIAQVLVGQPFDTT), 84–104 (VFAFYKGALTPLLGVGICVSV), 140–160 (LPLSQYYVCGLTGGVVNSFLA), 205–225 (TMIRAGHGLGTYFLVYEALVA), 243–263 (CLFGAFSGTMLWLTVYPLDVV), and 297–318 (FFKGFGPTMVRSAPVNGATFLT).

The protein belongs to the mitochondrial carrier (TC 2.A.29) family.

It is found in the mitochondrion inner membrane. This Saccharomyces cerevisiae (strain ATCC 204508 / S288c) (Baker's yeast) protein is Carrier protein YMC2, mitochondrial (YMC2).